The chain runs to 336 residues: Protein RecA (336 aa).

G66–T73 contributes to the ATP binding site.

Belongs to the RecA family.

The protein localises to the cytoplasm. Functionally, can catalyze the hydrolysis of ATP in the presence of single-stranded DNA, the ATP-dependent uptake of single-stranded DNA by duplex DNA, and the ATP-dependent hybridization of homologous single-stranded DNAs. It interacts with LexA causing its activation and leading to its autocatalytic cleavage. This is Protein RecA from Mycoplasma pneumoniae (strain ATCC 29342 / M129 / Subtype 1) (Mycoplasmoides pneumoniae).